A 373-amino-acid chain; its full sequence is Carnosine N-methyltransferase (373 aa).

S-adenosyl-L-methionine contacts are provided by Gln-110, Arg-113, Gly-154, Glu-175, Asp-242, Phe-243, and Cys-262. Position 266 (Asp-266) interacts with carnosine. Position 274 (Tyr-274) interacts with S-adenosyl-L-methionine. Carnosine is bound by residues His-297 and Tyr-356.

The protein belongs to the carnosine N-methyltransferase family.

It localises to the cytoplasm. It is found in the nucleus. The catalysed reaction is carnosine + S-adenosyl-L-methionine = anserine + S-adenosyl-L-homocysteine + H(+). In terms of biological role, N-methyltransferase that mediates the formation of anserine (beta-alanyl-N(Pi)-methyl-L-histidine) from carnosine. Also methylates other L-histidine-containing di- and tripeptides such as Gly-Gly-His, Gly-His and homocarnosine (GABA-His). The protein is Carnosine N-methyltransferase of Schizosaccharomyces pombe (strain 972 / ATCC 24843) (Fission yeast).